The following is a 198-amino-acid chain: Probable GTP-binding protein EngB (198 aa).

The EngB-type G domain occupies 21–195 (NFSEVAFLGR…EDIIINQTLG (175 aa)). GTP contacts are provided by residues 29 to 36 (GRSNVGKS), 56 to 60 (GKTQL), 81 to 84 (DLPG), 151 to 154 (TKCD), and 174 to 176 (VSN). Mg(2+) is bound by residues S36 and T58.

Belongs to the TRAFAC class TrmE-Era-EngA-EngB-Septin-like GTPase superfamily. EngB GTPase family. Requires Mg(2+) as cofactor.

In terms of biological role, necessary for normal cell division and for the maintenance of normal septation. In Campylobacter jejuni subsp. jejuni serotype O:2 (strain ATCC 700819 / NCTC 11168), this protein is Probable GTP-binding protein EngB.